Consider the following 617-residue polypeptide: Vacuolar protein sorting-associated protein 33B (617 aa).

Belongs to the STXBP/unc-18/SEC1 family. As to quaternary structure, probable core component of the class C core vacuole/endosome tethering (CORVET) complex. The common core is composed of the class C Vps proteins vps-11, vps-16 and vps-18, and which further associates with vps-8 and vps-33.2. Interacts with spe-39. Broadly expressed in somatic tissues including the pharynx, intestine, spermatheca, and in coelomocytes. Expressed in the lining of the gut lumen.

The protein resides in the early endosome. The protein localises to the late endosome membrane. Its subcellular location is the lysosome membrane. It is found in the cytoplasmic vesicle. It localises to the clathrin-coated vesicle. The protein resides in the recycling endosome. Plays a role in vesicle-mediated protein trafficking to lysosomal compartments and in membrane docking/fusion reactions of late endosomes/lysosomes. Believed to act as a component of the putative CORVET endosomal tethering complex which is proposed to be involved in the rab-5-to-rab-7 endosome conversion probably implicating sand-1, and via binding SNAREs and SNARE complexes to mediate tethering and docking events during SNARE-mediated membrane fusion. The CORVET complex is proposed to function as a rab-5 effector to mediate early endosome fusion probably in specific endosome subpopulations. Most likely within the CORVET complex, it is involved in the fusion of endocytic compartments. Required for sperm development and function. The sequence is that of Vacuolar protein sorting-associated protein 33B from Caenorhabditis elegans.